A 401-amino-acid chain; its full sequence is Glyceraldehyde-3-phosphate dehydrogenase A, chloroplastic (401 aa).

The N-terminal 65 residues, 1-65 (MASNMLSIAN…RSSQNGVVEA (65 aa)), are a transit peptide targeting the chloroplast. Residues 76 to 77 (RI), Asp100, and Arg145 contribute to the NADP(+) site. D-glyceraldehyde 3-phosphate contacts are provided by residues 217–219 (SCT), Thr248, Arg263, 276–277 (TG), and Arg299. Cys218 functions as the Nucleophile in the catalytic mechanism. Asn381 is an NADP(+) binding site.

This sequence belongs to the glyceraldehyde-3-phosphate dehydrogenase family. In terms of assembly, tetramer of either four A chains (GAPDH 2) or two A and two B chains (GAPDH 1).

The protein localises to the plastid. It localises to the chloroplast. The catalysed reaction is D-glyceraldehyde 3-phosphate + phosphate + NADP(+) = (2R)-3-phospho-glyceroyl phosphate + NADPH + H(+). Its pathway is carbohydrate biosynthesis; Calvin cycle. The polypeptide is Glyceraldehyde-3-phosphate dehydrogenase A, chloroplastic (GAPA) (Spinacia oleracea (Spinach)).